The sequence spans 155 residues: SsrA-binding protein (155 aa).

This sequence belongs to the SmpB family.

The protein localises to the cytoplasm. In terms of biological role, required for rescue of stalled ribosomes mediated by trans-translation. Binds to transfer-messenger RNA (tmRNA), required for stable association of tmRNA with ribosomes. tmRNA and SmpB together mimic tRNA shape, replacing the anticodon stem-loop with SmpB. tmRNA is encoded by the ssrA gene; the 2 termini fold to resemble tRNA(Ala) and it encodes a 'tag peptide', a short internal open reading frame. During trans-translation Ala-aminoacylated tmRNA acts like a tRNA, entering the A-site of stalled ribosomes, displacing the stalled mRNA. The ribosome then switches to translate the ORF on the tmRNA; the nascent peptide is terminated with the 'tag peptide' encoded by the tmRNA and targeted for degradation. The ribosome is freed to recommence translation, which seems to be the essential function of trans-translation. The chain is SsrA-binding protein from Streptococcus pyogenes serotype M5 (strain Manfredo).